Consider the following 355-residue polypeptide: UDP-N-acetylglucosamine--N-acetylmuramyl-(pentapeptide) pyrophosphoryl-undecaprenol N-acetylglucosamine transferase (355 aa).

Residues Thr-15–Gly-17, Asn-127, Arg-163, Ser-191, Ile-244, Ala-263–Glu-268, and Gln-288 contribute to the UDP-N-acetyl-alpha-D-glucosamine site.

This sequence belongs to the glycosyltransferase 28 family. MurG subfamily.

Its subcellular location is the cell inner membrane. It catalyses the reaction di-trans,octa-cis-undecaprenyl diphospho-N-acetyl-alpha-D-muramoyl-L-alanyl-D-glutamyl-meso-2,6-diaminopimeloyl-D-alanyl-D-alanine + UDP-N-acetyl-alpha-D-glucosamine = di-trans,octa-cis-undecaprenyl diphospho-[N-acetyl-alpha-D-glucosaminyl-(1-&gt;4)]-N-acetyl-alpha-D-muramoyl-L-alanyl-D-glutamyl-meso-2,6-diaminopimeloyl-D-alanyl-D-alanine + UDP + H(+). Its pathway is cell wall biogenesis; peptidoglycan biosynthesis. Cell wall formation. Catalyzes the transfer of a GlcNAc subunit on undecaprenyl-pyrophosphoryl-MurNAc-pentapeptide (lipid intermediate I) to form undecaprenyl-pyrophosphoryl-MurNAc-(pentapeptide)GlcNAc (lipid intermediate II). This Salmonella choleraesuis (strain SC-B67) protein is UDP-N-acetylglucosamine--N-acetylmuramyl-(pentapeptide) pyrophosphoryl-undecaprenol N-acetylglucosamine transferase.